A 445-amino-acid chain; its full sequence is Probable aminotransferase TAT3 (445 aa).

The protein belongs to the class-I pyridoxal-phosphate-dependent aminotransferase family. Requires pyridoxal 5'-phosphate as cofactor. In terms of tissue distribution, expressed in roots, leaves and cauline leaves.

The chain is Probable aminotransferase TAT3 (TAT3) from Arabidopsis thaliana (Mouse-ear cress).